The primary structure comprises 293 residues: Ribosomal protein L11 methyltransferase (293 aa).

Residues T145, G166, D188, and N230 each contribute to the S-adenosyl-L-methionine site.

Belongs to the methyltransferase superfamily. PrmA family.

Its subcellular location is the cytoplasm. It catalyses the reaction L-lysyl-[protein] + 3 S-adenosyl-L-methionine = N(6),N(6),N(6)-trimethyl-L-lysyl-[protein] + 3 S-adenosyl-L-homocysteine + 3 H(+). Methylates ribosomal protein L11. The sequence is that of Ribosomal protein L11 methyltransferase from Salmonella agona (strain SL483).